A 353-amino-acid chain; its full sequence is B1 bradykinin receptor (353 aa).

Topologically, residues Met1 to Leu40 are extracellular. Residues Asn14 and Asn22 are each glycosylated (N-linked (GlcNAc...) asparagine). A helical transmembrane segment spans residues Pro41–Leu64. The Cytoplasmic segment spans residues Pro65–Glu73. Residues Ile74 to Trp98 traverse the membrane as a helical segment. Residues Asn99–Arg111 lie on the Extracellular side of the membrane. The cysteines at positions 110 and 189 are disulfide-linked. A helical membrane pass occupies residues Val112 to Gln133. At Asp134–Arg155 the chain is on the cytoplasmic side. Residues Val156 to Ile178 traverse the membrane as a helical segment. Topologically, residues Gln179 to His199 are extracellular. N-linked (GlcNAc...) asparagine glycosylation occurs at Asn185. Residues Phe200–Leu226 traverse the membrane as a helical segment. Residues Ala227–Lys247 lie on the Cytoplasmic side of the membrane. Residues Thr248–Leu272 form a helical membrane-spanning segment. Residues Glu273–Asp291 lie on the Extracellular side of the membrane. A helical transmembrane segment spans residues Leu292–Phe314. The Cytoplasmic portion of the chain corresponds to Val315 to Asn353. Cys330 carries S-palmitoyl cysteine lipidation.

This sequence belongs to the G-protein coupled receptor 1 family. Bradykinin receptor subfamily. BDKRB1 sub-subfamily.

It is found in the cell membrane. This is a receptor for bradykinin. Could be a factor in chronic pain and inflammation. This Homo sapiens (Human) protein is B1 bradykinin receptor (BDKRB1).